Consider the following 389-residue polypeptide: Xylose isomerase (389 aa).

Active-site residues include His-54 and Asp-57. Mg(2+) is bound by residues Glu-181, Glu-217, His-220, Asp-245, Asp-255, Asp-257, and Asp-287.

The protein belongs to the xylose isomerase family. Homotetramer. The cofactor is Mg(2+).

It localises to the cytoplasm. It catalyses the reaction alpha-D-xylose = alpha-D-xylulofuranose. Its function is as follows. Involved in D-xylose catabolism. The chain is Xylose isomerase (xylA) from Streptomyces violaceusniger.